The following is a 275-amino-acid chain: MEERKEEGEAEIQEHGPEHWFSKWERQCLAEAEQDEQLSPELQEEAAAAAQPEHKQQKLWHLFQNSATAVAQLYKDRVCQQPGLSLWVPFQNAATAVTNLYKESVDTHQRSFDIGIQIGYQRRNKDVLAWVKKRRRTIRREDLISFLCGKVPPPRNSRAPPRLTVVSPNRATSTETSSSVETDLQPFREAIALHGLSGAMASISVRSSTPGSPTHVSSGPNASRRRNGLHDVDLNTFITEEMALHLDNGGTRKRTSAQCGDVITDSPTHKRNRML.

The segment covering 32–44 (AEQDEQLSPELQE) has biased composition (acidic residues). 4 disordered regions span residues 32–51 (AEQD…AAAQ), 155–181 (RNSR…SSVE), 204–228 (SVRS…RRNG), and 250–275 (GTRK…NRML). Serine 167 is subject to Phosphoserine. Positions 172–181 (TSTETSSSVE) are enriched in low complexity. A compositionally biased stretch (polar residues) spans 204–221 (SVRSSTPGSPTHVSSGPN). A Phosphoserine modification is found at serine 212.

This sequence belongs to the HAPSTR1 family. Homooligomer. Heterooligomer with HAPSTR2; the interaction is direct and stabilizes HAPSTR1. Interacts with HUWE1. Ubiquitinated by HUWE1. Promotes HAPSTR1 degradation through polyubiquitination.

It localises to the nucleus. Its subcellular location is the cytoplasm. Functionally, acts as a central player within a network of stress response pathways promoting cellular adaptability. The E3 ligase HUWE1 assists HAPSTR1 in controlling stress signaling and in turn, HUWE1 feeds back to promote the degradation of HAPSTR1. HAPSTR1 represents a central coordination mechanism for stress response programs. Functions as a negative regulator of TP53/P53 in the cellular response to telomere erosion and probably also DNA damage. May attenuate p53/TP53 activation through the E3 ubiquitin ligase HUWE1. This is HUWE1-associated protein modifying stress responses from Mus musculus (Mouse).